We begin with the raw amino-acid sequence, 273 residues long: Pyrroline-5-carboxylate reductase (273 aa).

It belongs to the pyrroline-5-carboxylate reductase family.

The protein resides in the cytoplasm. It catalyses the reaction L-proline + NADP(+) = (S)-1-pyrroline-5-carboxylate + NADPH + 2 H(+). The enzyme catalyses L-proline + NAD(+) = (S)-1-pyrroline-5-carboxylate + NADH + 2 H(+). It functions in the pathway amino-acid biosynthesis; L-proline biosynthesis; L-proline from L-glutamate 5-semialdehyde: step 1/1. The chain is Pyrroline-5-carboxylate reductase (PROC) from Pisum sativum (Garden pea).